The primary structure comprises 345 residues: NADH-ubiquinone oxidoreductase chain 2 (345 aa).

The next 9 membrane-spanning stretches (helical) occupy residues 25-45, 60-80, 99-119, 149-171, 178-198, 199-219, 242-262, 282-302, and 324-344; these read HWLL…PLMT, FLTQ…NAWL, TIAI…PEVL, LNTP…GGLN, ILAF…PFSP, QLMI…FLVL, ALSL…GFVP, LALS…IVTL, and LLLS…PLTL.

Belongs to the complex I subunit 2 family. In terms of assembly, core subunit of respiratory chain NADH dehydrogenase (Complex I) which is composed of 45 different subunits.

Its subcellular location is the mitochondrion inner membrane. It catalyses the reaction a ubiquinone + NADH + 5 H(+)(in) = a ubiquinol + NAD(+) + 4 H(+)(out). Core subunit of the mitochondrial membrane respiratory chain NADH dehydrogenase (Complex I) which catalyzes electron transfer from NADH through the respiratory chain, using ubiquinone as an electron acceptor. Essential for the catalytic activity and assembly of complex I. The sequence is that of NADH-ubiquinone oxidoreductase chain 2 (mt-nd2) from Xenopus laevis (African clawed frog).